The primary structure comprises 589 residues: Mediator of RNA polymerase II transcription subunit 26 (589 aa).

The TFIIS N-terminal domain occupies 10–87 (QMRDRLLQAI…RNWQKLIEPG (78 aa)). Disordered regions lie at residues 83 to 233 (LIEP…TKLP), 247 to 320 (ARVD…DGPS), and 363 to 441 (LETK…PIPE). Residues 190 to 213 (LLEKDDEVPSDRIRLEHLDNDRHN) are compositionally biased toward basic and acidic residues. The span at 259 to 268 (SPRYSSSPRS) shows a compositional bias: low complexity. Polar residues predominate over residues 276-297 (KRSTTYAPKGTLSSPSLNSAQV). 2 stretches are compositionally biased toward basic and acidic residues: residues 398–412 (SEDR…RRLT) and 424–435 (TPKESHQEEECH).

It belongs to the Mediator complex subunit 26 family. In terms of assembly, component of the Mediator complex.

The protein resides in the nucleus. Component of the Mediator complex, a coactivator involved in the regulated transcription of nearly all RNA polymerase II-dependent genes. Mediator functions as a bridge to convey information from gene-specific regulatory proteins to the basal RNA polymerase II transcription machinery. Mediator is recruited to promoters by direct interactions with regulatory proteins and serves as a scaffold for the assembly of a functional preinitiation complex with RNA polymerase II and the general transcription factors. The protein is Mediator of RNA polymerase II transcription subunit 26 (med26) of Danio rerio (Zebrafish).